The chain runs to 360 residues: Peptide chain release factor 1 (360 aa).

The residue at position 235 (Gln-235) is an N5-methylglutamine. The interval 285–304 is disordered; the sequence is KRQQEEASTRRNLLGSGDRS.

It belongs to the prokaryotic/mitochondrial release factor family. In terms of processing, methylated by PrmC. Methylation increases the termination efficiency of RF1.

It localises to the cytoplasm. Functionally, peptide chain release factor 1 directs the termination of translation in response to the peptide chain termination codons UAG and UAA. This Edwardsiella ictaluri (strain 93-146) protein is Peptide chain release factor 1.